Consider the following 296-residue polypeptide: Small ribosomal subunit biogenesis GTPase RsgA (296 aa).

A CP-type G domain is found at 63–224 (KNQLVRPMVA…IADTPGFSSY (162 aa)). GTP-binding positions include 112 to 115 (SKTD) and 167 to 175 (GQTGAGKST). The Zn(2+) site is built by Cys-248, Cys-253, His-255, and Cys-261.

Belongs to the TRAFAC class YlqF/YawG GTPase family. RsgA subfamily. Monomer. Associates with 30S ribosomal subunit, binds 16S rRNA. Zn(2+) serves as cofactor.

The protein resides in the cytoplasm. Functionally, one of several proteins that assist in the late maturation steps of the functional core of the 30S ribosomal subunit. Helps release RbfA from mature subunits. May play a role in the assembly of ribosomal proteins into the subunit. Circularly permuted GTPase that catalyzes slow GTP hydrolysis, GTPase activity is stimulated by the 30S ribosomal subunit. The protein is Small ribosomal subunit biogenesis GTPase RsgA of Limosilactobacillus fermentum (strain NBRC 3956 / LMG 18251) (Lactobacillus fermentum).